The chain runs to 115 residues: MPKANNAVASRARRKRILKKAKGFWGARGNVLTVVKHSVDKAEQYAYRDRRAKKRTFRSLWIMRINAAARLNGTTYSQLINGMAKNNIQIDRKALAEIAVKDAAAFSAIVQAANK.

Belongs to the bacterial ribosomal protein bL20 family.

In terms of biological role, binds directly to 23S ribosomal RNA and is necessary for the in vitro assembly process of the 50S ribosomal subunit. It is not involved in the protein synthesizing functions of that subunit. The sequence is that of Large ribosomal subunit protein bL20 from Chlorobium chlorochromatii (strain CaD3).